A 404-amino-acid polypeptide reads, in one-letter code: Adenylosuccinate synthetase (404 aa).

GTP contacts are provided by residues Gly12–Lys18 and Gly40–Thr42. Asp13 (proton acceptor) is an active-site residue. The Mg(2+) site is built by Asp13 and Gly40. Residues Asp13–Lys16, Asn38–His41, Thr121, Arg135, Gln213, Thr228, and Arg296 each bind IMP. The active-site Proton donor is His41. Residue Thr292–Arg298 coordinates substrate. Residues Arg298, Lys324–Asp326, and Ser389–Gly391 contribute to the GTP site.

The protein belongs to the adenylosuccinate synthetase family. Homodimer. Mg(2+) serves as cofactor.

Its subcellular location is the cytoplasm. The catalysed reaction is IMP + L-aspartate + GTP = N(6)-(1,2-dicarboxyethyl)-AMP + GDP + phosphate + 2 H(+). It functions in the pathway purine metabolism; AMP biosynthesis via de novo pathway; AMP from IMP: step 1/2. Functionally, plays an important role in the de novo pathway of purine nucleotide biosynthesis. Catalyzes the first committed step in the biosynthesis of AMP from IMP. This is Adenylosuccinate synthetase from Deinococcus geothermalis (strain DSM 11300 / CIP 105573 / AG-3a).